Here is a 395-residue protein sequence, read N- to C-terminus: Probable isocitrate dehydrogenase [NAD] gamma 2, mitochondrial (395 aa).

The transit peptide at 1–25 (MLAAGSCSVRTILQPALLLGHSREV) directs the protein to the mitochondrion. Residue Thr117 coordinates citrate. Arg133, Arg164, and Asp251 together coordinate substrate. Asp251 provides a ligand contact to Mn(2+). Residue Asn321 coordinates ADP.

The protein belongs to the isocitrate and isopropylmalate dehydrogenases family. As to quaternary structure, heterooligomer of subunits alpha (IDH3A), beta (IDH3B), and gamma (IDH3G) in the apparent ratio of 2:1:1. The heterodimer containing one IDH3A and one IDH3B subunit and the heterodimer containing one IDH3A and one IDH3G subunit assemble into a heterotetramer (which contains two subunits of IDH3A, one of IDH3B and one of IDH3G) and further into the heterooctamer. It depends on Mg(2+) as a cofactor. The cofactor is Mn(2+).

The protein resides in the mitochondrion. The heterotetramer and the heterodimer composed of IDH3A and IDH3G subunits can be allosterically activated by citrate (CIT) or/and ADP, and the two activators can act independently or synergistically. The heterodimer composed of IDH3A and IDH3B subunits cannot be allosterically regulated and the allosteric regulation of the heterotetramer is through the IDH3G subunit and not the IDH3B subunit. The IDH3G subunit contains the allosteric site which consists of a CIT-binding site and an ADP-binding site, and the binding of CIT and ADP causes conformational changes at the allosteric site which are transmitted to the active site in the catalytic subunit (IDH3A) through a cascade of conformational changes at the heterodimer interface, leading to stabilization of the isocitrate-binding at the active site and thus activation of the enzyme. ATP can activate the heterotetramer and the heterodimer composed of IDH3A and IDH3G subunits at low concentrations but inhibits their activities at high concentrations, whereas ATP exhibits only inhibitory effect on the heterodimer composed of IDH3A and IDH3B subunits. In terms of biological role, regulatory subunit which plays a role in the allosteric regulation of the enzyme catalyzing the decarboxylation of isocitrate (ICT) into alpha-ketoglutarate. The heterodimer composed of the alpha (IDH3A) and beta (IDH3B) subunits and the heterodimer composed of the alpha (IDH3A) and gamma (IDH3G) subunits, have considerable basal activity but the full activity of the heterotetramer (containing two subunits of IDH3A, one of IDH3B and one of IDH3G) requires the assembly and cooperative function of both heterodimers. This chain is Probable isocitrate dehydrogenase [NAD] gamma 2, mitochondrial, found in Rattus norvegicus (Rat).